An 892-amino-acid polypeptide reads, in one-letter code: Alanine--tRNA ligase (892 aa).

His-578, His-582, Cys-681, and His-685 together coordinate Zn(2+).

The protein belongs to the class-II aminoacyl-tRNA synthetase family. It depends on Zn(2+) as a cofactor.

Its subcellular location is the cytoplasm. The enzyme catalyses tRNA(Ala) + L-alanine + ATP = L-alanyl-tRNA(Ala) + AMP + diphosphate. Functionally, catalyzes the attachment of alanine to tRNA(Ala) in a two-step reaction: alanine is first activated by ATP to form Ala-AMP and then transferred to the acceptor end of tRNA(Ala). Also edits incorrectly charged Ser-tRNA(Ala) and Gly-tRNA(Ala) via its editing domain. This chain is Alanine--tRNA ligase, found in Cutibacterium acnes (strain DSM 16379 / KPA171202) (Propionibacterium acnes).